Reading from the N-terminus, the 126-residue chain is uncharacterized protein (126 aa).

This is an uncharacterized protein from Xylella fastidiosa (strain 9a5c).